Reading from the N-terminus, the 212-residue chain is Redox-sensing transcriptional repressor Rex (212 aa).

The segment at residues 16-55 (IYYRYLNILLDADKTRVSSTELSEAVKVDSATIRRDFSYF) is a DNA-binding region (H-T-H motif). Residue 90–95 (GVGNLG) coordinates NAD(+).

It belongs to the transcriptional regulatory Rex family. As to quaternary structure, homodimer.

It is found in the cytoplasm. Modulates transcription in response to changes in cellular NADH/NAD(+) redox state. The sequence is that of Redox-sensing transcriptional repressor Rex from Levilactobacillus brevis (strain ATCC 367 / BCRC 12310 / CIP 105137 / JCM 1170 / LMG 11437 / NCIMB 947 / NCTC 947) (Lactobacillus brevis).